The following is a 297-amino-acid chain: Phosphatidylglycerol--prolipoprotein diacylglyceryl transferase (297 aa).

The next 4 membrane-spanning stretches (helical) occupy residues F20–I40, I58–E78, I104–I124, and I133–G153. R154 provides a ligand contact to a 1,2-diacyl-sn-glycero-3-phospho-(1'-sn-glycerol). Transmembrane regions (helical) follow at residues T194–Y214, G225–L245, and A266–L286.

The protein belongs to the Lgt family.

The protein resides in the cell inner membrane. The enzyme catalyses L-cysteinyl-[prolipoprotein] + a 1,2-diacyl-sn-glycero-3-phospho-(1'-sn-glycerol) = an S-1,2-diacyl-sn-glyceryl-L-cysteinyl-[prolipoprotein] + sn-glycerol 1-phosphate + H(+). It participates in protein modification; lipoprotein biosynthesis (diacylglyceryl transfer). Its function is as follows. Catalyzes the transfer of the diacylglyceryl group from phosphatidylglycerol to the sulfhydryl group of the N-terminal cysteine of a prolipoprotein, the first step in the formation of mature lipoproteins. In Prochlorococcus marinus subsp. pastoris (strain CCMP1986 / NIES-2087 / MED4), this protein is Phosphatidylglycerol--prolipoprotein diacylglyceryl transferase.